The following is a 1412-amino-acid chain: DNA-directed RNA polymerase subunit beta' (1412 aa).

Zn(2+)-binding residues include C70, C72, C85, and C88. Mg(2+) contacts are provided by D460, D462, and D464. C819, C893, C900, and C903 together coordinate Zn(2+). A disordered region spans residues 1393–1412 (EAFEFGTPSAPAEEPQHPAE).

It belongs to the RNA polymerase beta' chain family. In terms of assembly, the RNAP catalytic core consists of 2 alpha, 1 beta, 1 beta' and 1 omega subunit. When a sigma factor is associated with the core the holoenzyme is formed, which can initiate transcription. Mg(2+) serves as cofactor. The cofactor is Zn(2+).

The catalysed reaction is RNA(n) + a ribonucleoside 5'-triphosphate = RNA(n+1) + diphosphate. DNA-dependent RNA polymerase catalyzes the transcription of DNA into RNA using the four ribonucleoside triphosphates as substrates. This Burkholderia pseudomallei (strain 1106a) protein is DNA-directed RNA polymerase subunit beta'.